Here is a 376-residue protein sequence, read N- to C-terminus: PqqA peptide cyclase (376 aa).

One can recognise a Radical SAM core domain in the interval 4 to 219; sequence VPPPLSVLLE…VETARRSLGD (216 aa). 3 residues coordinate [4Fe-4S] cluster: C18, C22, and C25.

Belongs to the radical SAM superfamily. PqqE family. As to quaternary structure, interacts with PqqD. The interaction is necessary for activity of PqqE. [4Fe-4S] cluster is required as a cofactor.

The enzyme catalyses [PQQ precursor protein] + S-adenosyl-L-methionine = E-Y cross-linked-[PQQ precursor protein] + 5'-deoxyadenosine + L-methionine + H(+). The protein operates within cofactor biosynthesis; pyrroloquinoline quinone biosynthesis. Its function is as follows. Catalyzes the cross-linking of a glutamate residue and a tyrosine residue in the PqqA protein as part of the biosynthesis of pyrroloquinoline quinone (PQQ). This Xanthomonas campestris pv. campestris (strain 8004) protein is PqqA peptide cyclase.